The sequence spans 482 residues: Glutamate synthase [NADPH] small chain (482 aa).

The region spanning 39–72 (ERANEQANRCSQCGVPFCQVHCPVSNNIPDWLKL) is the 4Fe-4S ferredoxin-type domain. [4Fe-4S] cluster-binding residues include C95, C99, C105, and C109.

Aggregate of 4 catalytic active heterodimers, consisting of a large and a small subunit. [4Fe-4S] cluster is required as a cofactor.

The catalysed reaction is 2 L-glutamate + NADP(+) = L-glutamine + 2-oxoglutarate + NADPH + H(+). It functions in the pathway amino-acid biosynthesis; L-glutamate biosynthesis via GLT pathway; L-glutamate from 2-oxoglutarate and L-glutamine (NADP(+) route): step 1/1. The protein operates within energy metabolism; nitrogen metabolism. The sequence is that of Glutamate synthase [NADPH] small chain (gltD) from Azospirillum brasilense.